The following is a 317-amino-acid chain: Aspartate carbamoyltransferase catalytic subunit (317 aa).

Carbamoyl phosphate-binding residues include Arg64 and Thr65. Lys92 is a binding site for L-aspartate. Residues Arg114, His142, and Gln145 each coordinate carbamoyl phosphate. Positions 176 and 230 each coordinate L-aspartate. Carbamoyl phosphate-binding residues include Gly271 and Pro272.

It belongs to the aspartate/ornithine carbamoyltransferase superfamily. ATCase family. In terms of assembly, heterododecamer (2C3:3R2) of six catalytic PyrB chains organized as two trimers (C3), and six regulatory PyrI chains organized as three dimers (R2).

It catalyses the reaction carbamoyl phosphate + L-aspartate = N-carbamoyl-L-aspartate + phosphate + H(+). Its pathway is pyrimidine metabolism; UMP biosynthesis via de novo pathway; (S)-dihydroorotate from bicarbonate: step 2/3. Catalyzes the condensation of carbamoyl phosphate and aspartate to form carbamoyl aspartate and inorganic phosphate, the committed step in the de novo pyrimidine nucleotide biosynthesis pathway. The protein is Aspartate carbamoyltransferase catalytic subunit of Nitratidesulfovibrio vulgaris (strain DP4) (Desulfovibrio vulgaris).